The following is a 355-amino-acid chain: MGCAVSTARDKEAIERSKNIDRALRAEGERAASEVKLLLLGAGESGKSTIVKQMKIIHDTGYSQEECEEYRRVVFSNTVQSLMVIIRAMGRLKIEFADPSRTDIARQFFTHASAADEGILLPEIVLLMKKLWADGGVQQSFARSREYQLNDSAGYYLNSLDRIAQPNYIPTQQDVLRTRVKTTGIIETHFSCKQLHFKLFDVGGQRSERKKWIHCFEGVTAIIFCVALSGYDLVLAEDEEMNRMIESLKLFDSICNSKWFVETSIILFLNKKDLFEEKIKRSPLTICFPEYTGTNTFEEAANYIRMKFENLNKRKDQKEIYTHLTCATDTNNVKFVFDAVTDVIIKNNLKQIGLF.

A lipid anchor (N-myristoyl glycine) is attached at G2. Residue C3 is the site of S-palmitoyl cysteine attachment. A G-alpha domain is found at 33–355 (SEVKLLLLGA…KNNLKQIGLF (323 aa)). The G1 motif stretch occupies residues 36 to 49 (KLLLLGAGESGKST). GTP contacts are provided by residues 41 to 48 (GAGESGKS), 176 to 182 (LRTRVKT), 201 to 205 (DVGGQ), 270 to 273 (NKKD), and A327. Mg(2+) contacts are provided by S48 and T182. Positions 174–182 (DVLRTRVKT) are G2 motif. Residues 197-206 (FKLFDVGGQR) are G3 motif. A G4 motif region spans residues 266–273 (ILFLNKKD). Positions 325-330 (TCATDT) are G5 motif.

Belongs to the G-alpha family. G(i/o/t/z) subfamily. In terms of assembly, g proteins are composed of 3 units; alpha, beta and gamma. The alpha chain contains the guanine nucleotide binding site. Interacts (via GDP- or GTP-bound forms) with loco (via GoLoco and RGS domains). Interacts with raps/pins.

The protein resides in the cell membrane. It localises to the apical cell membrane. Functionally, guanine nucleotide-binding proteins (G proteins) are involved as modulators or transducers in various transmembrane signaling systems. Plays a role in glial cell differentiation during embryogenesis; loco, Galphao and the G-protein coupled receptor, moody, are required in the surface glia to achieve effective insulation of the nerve cord. This Drosophila melanogaster (Fruit fly) protein is G protein alpha i subunit (Galphai).